Here is a 1362-residue protein sequence, read N- to C-terminus: DNA-directed RNA polymerase subunit beta (1362 aa).

Belongs to the RNA polymerase beta chain family. In terms of assembly, the RNAP catalytic core consists of 2 alpha, 1 beta, 1 beta' and 1 omega subunit. When a sigma factor is associated with the core the holoenzyme is formed, which can initiate transcription.

The catalysed reaction is RNA(n) + a ribonucleoside 5'-triphosphate = RNA(n+1) + diphosphate. DNA-dependent RNA polymerase catalyzes the transcription of DNA into RNA using the four ribonucleoside triphosphates as substrates. The chain is DNA-directed RNA polymerase subunit beta from Acinetobacter baylyi (strain ATCC 33305 / BD413 / ADP1).